The following is a 251-amino-acid chain: Hydroxypyruvate/pyruvate aldolase (251 aa).

Histidine 44 (proton acceptor) is an active-site residue. Position 69 (arginine 69) interacts with 3-hydroxypyruvate. Glutamate 145 is a Mg(2+) binding site. Positions 170 and 171 each coordinate 3-hydroxypyruvate. Aspartate 171 is a Mg(2+) binding site.

Belongs to the HpcH/HpaI aldolase family. Homohexamer. Trimer of homodimers. Requires Mn(2+) as cofactor. The cofactor is Mg(2+). Co(2+) is required as a cofactor. Zn(2+) serves as cofactor.

The enzyme catalyses D-glyceraldehyde + 3-hydroxypyruvate = 2-dehydro-D-galactonate. It carries out the reaction D-glyceraldehyde + pyruvate = 2-dehydro-3-deoxy-L-galactonate. It catalyses the reaction L-glyceraldehyde + 3-hydroxypyruvate = (3S,4S,5S)-3,4,5,6-tetrahydroxy-2-oxohexanoate. The catalysed reaction is (R)-lactaldehyde + 3-hydroxypyruvate = (3S,4S,5R)-3,4,5-trihydroxy-2-oxohexanoate. The enzyme catalyses (R)-lactaldehyde + 3-hydroxypyruvate = (3S,4R,5R)-3,4,5-trihydroxy-2-oxohexanoate. It carries out the reaction (S)-lactaldehyde + 3-hydroxypyruvate = (3S,4S,5S)-3,4,5-trihydroxy-2-oxohexanoate. It catalyses the reaction D-erythrose + 3-hydroxypyruvate = (3S,4S,5R,6R)-3,4,5,6,7-pentahydroxy-2-oxoheptanoate. Binding of substrate induces a dynamic movement of the metal cofactor between an inactive coordination sphere to a catalytically active one. When oxaloacetate is used as substrate, activity is increased in the presence of micromolar concentrations of inorganic phosphate. The phosphate does not improve the binding of the substrate, but exclusively increases its rate of decarboxylation. Excessive phosphate concentrations negatively affect the reaction rate by removing the metal cofactor. Its function is as follows. Aldolase which can catalyze in vitro the aldolisation reaction between hydroxypyruvate (HPA) or pyruvate (PA) and D-glyceraldehyde (D-GA). The condensation of hydroxypyruvate and D-glyceraldehyde produces 2-dehydro-D-galactonate as the major product. The condensation of pyruvate and D-glyceraldehyde produces 2-dehydro-3-deoxy-L-galactonate. Can use other electrophilic substrates such as L-glyceraldehyde, D- and L-lactaldehyde and D-erythrose. Also catalyzes the retro-aldol type decarboxylation of oxaloacetate, a general property of known pyruvate aldolases. This chain is Hydroxypyruvate/pyruvate aldolase, found in Rhizorhabdus wittichii (strain DSM 6014 / CCUG 31198 / JCM 15750 / NBRC 105917 / EY 4224 / RW1) (Sphingomonas wittichii).